We begin with the raw amino-acid sequence, 354 residues long: S-adenosylmethionine:tRNA ribosyltransferase-isomerase (354 aa).

It belongs to the QueA family. Monomer.

It is found in the cytoplasm. It carries out the reaction 7-aminomethyl-7-carbaguanosine(34) in tRNA + S-adenosyl-L-methionine = epoxyqueuosine(34) in tRNA + adenine + L-methionine + 2 H(+). It participates in tRNA modification; tRNA-queuosine biosynthesis. Its function is as follows. Transfers and isomerizes the ribose moiety from AdoMet to the 7-aminomethyl group of 7-deazaguanine (preQ1-tRNA) to give epoxyqueuosine (oQ-tRNA). The sequence is that of S-adenosylmethionine:tRNA ribosyltransferase-isomerase from Klebsiella pneumoniae (strain 342).